Consider the following 194-residue polypeptide: NADH-quinone oxidoreductase subunit B (194 aa).

The interval 1-26 (MGLTPSATKPEIAQAPQGIVDPSTGR) is disordered. Cys-73, Cys-74, Cys-138, and Cys-168 together coordinate [4Fe-4S] cluster.

It belongs to the complex I 20 kDa subunit family. NDH-1 is composed of 14 different subunits. Subunits NuoB, C, D, E, F, and G constitute the peripheral sector of the complex. Requires [4Fe-4S] cluster as cofactor.

The protein localises to the cell inner membrane. It catalyses the reaction a quinone + NADH + 5 H(+)(in) = a quinol + NAD(+) + 4 H(+)(out). Functionally, NDH-1 shuttles electrons from NADH, via FMN and iron-sulfur (Fe-S) centers, to quinones in the respiratory chain. The immediate electron acceptor for the enzyme in this species is believed to be ubiquinone. Couples the redox reaction to proton translocation (for every two electrons transferred, four hydrogen ions are translocated across the cytoplasmic membrane), and thus conserves the redox energy in a proton gradient. In Xanthobacter autotrophicus (strain ATCC BAA-1158 / Py2), this protein is NADH-quinone oxidoreductase subunit B.